The following is a 231-amino-acid chain: 5'-methylthioadenosine/S-adenosylhomocysteine nucleosidase (231 aa).

The active-site Proton acceptor is E12. Substrate-binding positions include G78, V153, and M174–E175. The active-site Proton donor is the D198.

Belongs to the PNP/UDP phosphorylase family. MtnN subfamily.

The enzyme catalyses S-adenosyl-L-homocysteine + H2O = S-(5-deoxy-D-ribos-5-yl)-L-homocysteine + adenine. The catalysed reaction is S-methyl-5'-thioadenosine + H2O = 5-(methylsulfanyl)-D-ribose + adenine. It carries out the reaction 5'-deoxyadenosine + H2O = 5-deoxy-D-ribose + adenine. Its pathway is amino-acid biosynthesis; L-methionine biosynthesis via salvage pathway; S-methyl-5-thio-alpha-D-ribose 1-phosphate from S-methyl-5'-thioadenosine (hydrolase route): step 1/2. Its function is as follows. Catalyzes the irreversible cleavage of the glycosidic bond in both 5'-methylthioadenosine (MTA) and S-adenosylhomocysteine (SAH/AdoHcy) to adenine and the corresponding thioribose, 5'-methylthioribose and S-ribosylhomocysteine, respectively. Also cleaves 5'-deoxyadenosine, a toxic by-product of radical S-adenosylmethionine (SAM) enzymes, into 5-deoxyribose and adenine. In Aliivibrio fischeri (strain MJ11) (Vibrio fischeri), this protein is 5'-methylthioadenosine/S-adenosylhomocysteine nucleosidase.